Reading from the N-terminus, the 87-residue chain is Small ribosomal subunit protein uS17 (87 aa).

This sequence belongs to the universal ribosomal protein uS17 family. In terms of assembly, part of the 30S ribosomal subunit.

Its function is as follows. One of the primary rRNA binding proteins, it binds specifically to the 5'-end of 16S ribosomal RNA. The polypeptide is Small ribosomal subunit protein uS17 (Bacillus licheniformis (strain ATCC 14580 / DSM 13 / JCM 2505 / CCUG 7422 / NBRC 12200 / NCIMB 9375 / NCTC 10341 / NRRL NRS-1264 / Gibson 46)).